The chain runs to 371 residues: 4-hydroxy-3-methylbut-2-en-1-yl diphosphate synthase (flavodoxin) (371 aa).

[4Fe-4S] cluster is bound by residues cysteine 270, cysteine 273, cysteine 305, and glutamate 312.

This sequence belongs to the IspG family. [4Fe-4S] cluster is required as a cofactor.

The enzyme catalyses (2E)-4-hydroxy-3-methylbut-2-enyl diphosphate + oxidized [flavodoxin] + H2O + 2 H(+) = 2-C-methyl-D-erythritol 2,4-cyclic diphosphate + reduced [flavodoxin]. The protein operates within isoprenoid biosynthesis; isopentenyl diphosphate biosynthesis via DXP pathway; isopentenyl diphosphate from 1-deoxy-D-xylulose 5-phosphate: step 5/6. Converts 2C-methyl-D-erythritol 2,4-cyclodiphosphate (ME-2,4cPP) into 1-hydroxy-2-methyl-2-(E)-butenyl 4-diphosphate. This Psychrobacter arcticus (strain DSM 17307 / VKM B-2377 / 273-4) protein is 4-hydroxy-3-methylbut-2-en-1-yl diphosphate synthase (flavodoxin).